We begin with the raw amino-acid sequence, 232 residues long: Pirin-like protein CC_1473 (232 aa).

It belongs to the pirin family.

The sequence is that of Pirin-like protein CC_1473 from Caulobacter vibrioides (strain ATCC 19089 / CIP 103742 / CB 15) (Caulobacter crescentus).